Here is a 111-residue protein sequence, read N- to C-terminus: Estrogen receptor (111 aa).

The interval 1–42 (PSGYAVREAGPPAYYRPNSDNRRQGGRERLASTSDKGSMAVE) is disordered. The segment at 1-49 (PSGYAVREAGPPAYYRPNSDNRRQGGRERLASTSDKGSMAVESAKETRY) is modulating. A compositionally biased stretch (basic and acidic residues) spans 19 to 30 (SDNRRQGGRERL). Ser32 carries the phosphoserine modification. 2 NR C4-type zinc fingers span residues 50 to 70 (CAVCNDYASGYHYGVWSCEGC) and 86 to 110 (CPATNQCTIDKNRRKSCQACRLRKC). A DNA-binding region (nuclear receptor) is located at residues 50 to 111 (CAVCNDYASG…CQACRLRKCY (62 aa)).

It belongs to the nuclear hormone receptor family. NR3 subfamily. As to quaternary structure, binds DNA as a homodimer. Can form a heterodimer with ESR2. Interacts with coactivator NCOA5. Interacts with PELP1, the interaction is enhanced by 17-beta-estradiol; the interaction increases ESR1 transcriptional activity. Interacts with NCOA7; the interaction is ligand-inducible. Interacts with AKAP13, CUEDC2, HEXIM1, KDM5A, MAP1S, SMARD1, and UBE1C. Interacts with MUC1; the interaction is stimulated by 7 beta-estradiol (E2) and enhances ESR1-mediated transcription. Interacts with DNTTIP2, and UIMC1. Interacts with KMT2D/MLL2. Interacts with ATAD2; the interaction is enhanced by estradiol. Interacts with KIF18A and LDB1. Interacts with RLIM (via its C-terminus). Interacts with MACROD1. Interacts with SH2D4A and PLCG. Interacts with SH2D4A; the interaction blocks binding to PLCG and inhibits estrogen-induced cell proliferation. Interacts with DYNLL1. Interacts with CCDC62; the interaction requires estradiol and appears to enhance the transcription of target genes. Interacts with NR2C1; the interaction prevents homodimerization of ESR1 and suppresses its transcriptional activity and cell growth. Interacts with DNAAF4. Interacts with PRMT2. Interacts with RBFOX2. Interacts with EP300; the interaction is estrogen-dependent and enhanced by CITED1. Interacts with CITED1; the interaction is estrogen-dependent. Interacts with FAM120B, FOXL2, PHB2 and SLC30A9. Interacts with coactivators NCOA3 and NCOA6. Interacts with STK3/MST2 only in the presence of SAV1 and vice-versa. Binds to CSNK1D. Interacts with NCOA2; NCOA2 can interact with ESR1 AF-1 and AF-2 domains simultaneously and mediate their transcriptional synergy. Interacts with DDX5. Interacts with NCOA1; the interaction seems to require a self-association of N-terminal and C-terminal regions. Interacts with ZNF366, DDX17, NFKB1, RELA, SP1 and SP3. Interacts with NRIP1. Interacts with GPER1; the interaction occurs in an estrogen-dependent manner. Interacts with CLOCK and the interaction is stimulated by estrogen. Interacts with TRIP4 (ufmylated); estrogen dependent. Interacts with LMTK3; the interaction phosphorylates ESR1 (in vitro) and protects it against proteasomal degradation. Interacts with CCAR2 (via N-terminus) in a ligand-independent manner. Interacts with ZFHX3. Interacts with SFR1 in a ligand-dependent and -independent manner. Interacts with DCAF13, LATS1 and DCAF1; regulates ESR1 ubiquitination and ubiquitin-mediated proteasomal degradation. Interacts (via DNA-binding domain) with POU4F2 (C-terminus); this interaction increases the estrogen receptor ESR1 transcriptional activity in a DNA- and ligand 17-beta-estradiol-independent manner. Interacts with ESRRB isoform 1. Interacts with UBE3A and WBP2. Interacts with GTF2B. Interacts with RBM39. In the absence of hormonal ligand, interacts with TACC1. Interacts with PI3KR1 or PI3KR2 and PTK2/FAK1. Interacts with SRC. Interacts with BAG1; the interaction is promoted in the absence of estradiol (17-beta-estradiol/E2). Interacts with and ubiquitinated by STUB1; the interaction is promoted in the absence of estradiol (17-beta-estradiol/E2). Interacts with NEDD8. In terms of processing, ubiquitinated; regulated by LATS1 via DCAF1 it leads to ESR1 proteasomal degradation. Deubiquitinated by OTUB1. Ubiquitinated by STUB1/CHIP; in the CA1 hippocampal region following loss of endogenous circulating estradiol (17-beta-estradiol/E2). Ubiquitinated by UBR5, leading to its degradation: UBR5 specifically recognizes and binds ligand-bound ESR1 when it is not associated with coactivators (NCOAs). In presence of NCOAs, the UBR5-degron is not accessible, preventing its ubiquitination and degradation. Post-translationally, dimethylated by PRMT1. Demethylated by JMJD6. Palmitoylated by ZDHHC7 and ZDHHC21. This modification is required for plasma membrane targeting and for rapid intracellular signaling via ERK and AKT kinases and cAMP generation, but not for signaling mediated by the nuclear hormone receptor. In terms of processing, phosphorylated by cyclin A/CDK2 and CK1. Phosphorylation probably enhances transcriptional activity. Dephosphorylation by PPP5C inhibits its transactivation activity. Phosphorylated by LMTK3 (in vitro).

It localises to the nucleus. It is found in the cytoplasm. The protein localises to the golgi apparatus. The protein resides in the cell membrane. Nuclear hormone receptor. The steroid hormones and their receptors are involved in the regulation of eukaryotic gene expression and affect cellular proliferation and differentiation in target tissues. Ligand-dependent nuclear transactivation involves either direct homodimer binding to a palindromic estrogen response element (ERE) sequence or association with other DNA-binding transcription factors, such as AP-1/c-Jun, c-Fos, ATF-2, Sp1 and Sp3, to mediate ERE-independent signaling. Ligand binding induces a conformational change allowing subsequent or combinatorial association with multiprotein coactivator complexes through LXXLL motifs of their respective components. Mutual transrepression occurs between the estrogen receptor (ER) and NF-kappa-B in a cell-type specific manner. Decreases NF-kappa-B DNA-binding activity and inhibits NF-kappa-B-mediated transcription from the IL6 promoter and displace RELA/p65 and associated coregulators from the promoter. Recruited to the NF-kappa-B response element of the CCL2 and IL8 promoters and can displace CREBBP. Present with NF-kappa-B components RELA/p65 and NFKB1/p50 on ERE sequences. Can also act synergistically with NF-kappa-B to activate transcription involving respective recruitment adjacent response elements; the function involves CREBBP. Can activate the transcriptional activity of TFF1. Also mediates membrane-initiated estrogen signaling involving various kinase cascades. Essential for MTA1-mediated transcriptional regulation of BRCA1 and BCAS3. Maintains neuronal survival in response to ischemic reperfusion injury when in the presence of circulating estradiol (17-beta-estradiol/E2). The protein is Estrogen receptor (ESR1) of Ovis aries (Sheep).